The chain runs to 37 residues: Large ribosomal subunit protein bL36c (37 aa).

Belongs to the bacterial ribosomal protein bL36 family.

It localises to the plastid. Its subcellular location is the chloroplast. In Porphyra purpurea (Red seaweed), this protein is Large ribosomal subunit protein bL36c (rpl36).